Here is a 459-residue protein sequence, read N- to C-terminus: Argininosuccinate lyase (459 aa).

It belongs to the lyase 1 family. Argininosuccinate lyase subfamily.

It is found in the cytoplasm. The catalysed reaction is 2-(N(omega)-L-arginino)succinate = fumarate + L-arginine. The protein operates within amino-acid biosynthesis; L-arginine biosynthesis; L-arginine from L-ornithine and carbamoyl phosphate: step 3/3. This chain is Argininosuccinate lyase, found in Geobacillus sp. (strain WCH70).